We begin with the raw amino-acid sequence, 513 residues long: Prostaglandin E2 receptor EP4 subtype (513 aa).

The Extracellular segment spans residues 1–44 (MAEVGGTIPRSNRELQRCVLLTTTIMSIPGVNASFSSTPERLNS). The N-linked (GlcNAc...) asparagine glycan is linked to Asn-32. Residues 45–68 (PVTIPAVMFIFGVVGNLVAIVVLC) form a helical membrane-spanning segment. Residues 69-80 (KSRKEQKETTFY) are Cytoplasmic-facing. The helical transmembrane segment at 81–104 (TLVCGLAVTDLLGTLLVSPVTIAT) threads the bilayer. The Extracellular portion of the chain corresponds to 105 to 121 (YMKGQWPGDQALCDYST). Cys-117 and Cys-195 are oxidised to a cystine. Residues 122 to 140 (FILLFFGLSGLSIICAMSI) form a helical membrane-spanning segment. Residues 141-160 (ERYLAINHAYFYSHYVDKRL) are Cytoplasmic-facing. Residues 161–185 (AGLTLFAIYASNVLFCALPNMGLGR) traverse the membrane as a helical segment. Residues 186 to 209 (SERQYPGTWCFIDWTTNVTAYAAF) lie on the Extracellular side of the membrane. A helical transmembrane segment spans residues 210–236 (SYMYAGFSSFLILATVLCNVLVCGALL). At 237–295 (RMHRQFMRRTSLGTEQHHAAAAAAVASVACRGHAGASPALQRLSDFRRRRSFRRIAGAE) the chain is on the cytoplasmic side. A helical transmembrane segment spans residues 296 to 323 (IQMVILLIATSLVVLICSIPLVVRVFIN). Residues 324–340 (QLYQPNVVKDISRNPDL) lie on the Extracellular side of the membrane. The chain crosses the membrane as a helical span at residues 341-360 (QAIRIASVNPILDPWIYILL). At 361 to 513 (RKTVLSKAIE…ETLKLSEKCI (153 aa)) the chain is on the cytoplasmic side. Positions 383-403 (GRDSSAQHCSESRRTSSAMSG) are disordered. Polar residues predominate over residues 384 to 403 (RDSSAQHCSESRRTSSAMSG). Ser-402, Ser-405, and Ser-407 each carry phosphoserine.

The protein belongs to the G-protein coupled receptor 1 family. As to quaternary structure, interacts with FEM1A. Phosphorylation mediates agonist-mediated desensitization by promoting cytoplasmic retention. In terms of tissue distribution, abundant expression in ileum, thymus and mastocytoma P-815 cells. Also observed in lung, spleen, heart and uterus.

The protein localises to the cell membrane. Functionally, receptor for prostaglandin E2 (PGE2). The activity of this receptor is mediated by G(s) proteins that stimulate adenylate cyclase. Has a relaxing effect on smooth muscle. May play an important role in regulating renal hemodynamics, intestinal epithelial transport, adrenal aldosterone secretion, and uterine function. The protein is Prostaglandin E2 receptor EP4 subtype (Ptger4) of Mus musculus (Mouse).